Consider the following 1272-residue polypeptide: Magnesium-chelatase subunit H (1272 aa).

The protein belongs to the Mg-chelatase subunit H family.

The enzyme catalyses protoporphyrin IX + Mg(2+) + ATP + H2O = Mg-protoporphyrin IX + ADP + phosphate + 3 H(+). It functions in the pathway porphyrin-containing compound metabolism; bacteriochlorophyll biosynthesis (light-independent). Involved in bacteriochlorophyll pigment biosynthesis; introduces a magnesium ion into protoporphyrin IX to yield Mg-protoroporphyrin IX. The polypeptide is Magnesium-chelatase subunit H (bchH) (Chlorobaculum parvum (strain DSM 263 / NCIMB 8327) (Chlorobium vibrioforme subsp. thiosulfatophilum)).